A 309-amino-acid chain; its full sequence is Taste receptor type 2 member 20 (309 aa).

The Extracellular segment spans residues 1-6 (MMSFLH). Residues 7-27 (IVFSILVVVAFILGNFANGFI) traverse the membrane as a helical segment. The Cytoplasmic segment spans residues 28-46 (ALINFIAWVKRQKISSADQ). The helical transmembrane segment at 47–67 (IIAALAVSRVGLLWVILLHWY) threads the bilayer. The Extracellular portion of the chain corresponds to 68 to 79 (STVLNPTSSNLK). The chain crosses the membrane as a helical span at residues 80–100 (VIIFISNAWAVTNHFSIWLAT). Residues 101-125 (SLSIFYLLKIVNFSRLIFHHLKRKA) are Cytoplasmic-facing. A helical transmembrane segment spans residues 126–146 (KSVVLVIVLGSLFFLVCHLVM). Topologically, residues 147-178 (KNTYINVWTEECEGNVTWKIKLRNAMHLSNLT) are extracellular. The chain crosses the membrane as a helical span at residues 179-199 (VAMLANLIPFTLTLISFLLLI). Residues 200–229 (YSLCKHLKKMQLHGKGSQDPSTKIHIKALQ) lie on the Cytoplasmic side of the membrane. The helical transmembrane segment at 230-250 (TVTSFLILLAIYFLCLITSFW) threads the bilayer. Residues 251-259 (NSKMRPKEI) are Extracellular-facing. The chain crosses the membrane as a helical span at residues 260 to 280 (VLMLCQAFGIIYPSFHSFILI). Topologically, residues 281-309 (WGNKTLKQTFLSVLWQVTCWAKGQNQSTP) are cytoplasmic.

It belongs to the G-protein coupled receptor T2R family.

The protein resides in the membrane. Receptor that may play a role in the perception of bitterness and is gustducin-linked. May play a role in sensing the chemical composition of the gastrointestinal content. The activity of this receptor may stimulate alpha gustducin, mediate PLC-beta-2 activation and lead to the gating of TRPM5. The polypeptide is Taste receptor type 2 member 20 (TAS2R20) (Pan paniscus (Pygmy chimpanzee)).